Reading from the N-terminus, the 89-residue chain is MTKGTTSFGKRHNKTHTICRRCGNSSYHLQKSKCSQCGYPAAKTRSFNWSRKAKGRKAQGTGRMRYLKNLRRRFRNGLREGGAAKKKTN.

Residues cysteine 19, cysteine 22, cysteine 34, and cysteine 37 each contribute to the Zn(2+) site. Residues 19-37 (CRRCGNSSYHLQKSKCSQC) form a C4-type zinc finger.

Belongs to the eukaryotic ribosomal protein eL37 family. Requires Zn(2+) as cofactor.

Functionally, binds to the 23S rRNA. This Drosophila melanogaster (Fruit fly) protein is Large ribosomal subunit protein L37-2.